Reading from the N-terminus, the 404-residue chain is Tryptophan synthase beta chain (404 aa).

The residue at position 94 (lysine 94) is an N6-(pyridoxal phosphate)lysine.

It belongs to the TrpB family. As to quaternary structure, tetramer of two alpha and two beta chains. The cofactor is pyridoxal 5'-phosphate.

The enzyme catalyses (1S,2R)-1-C-(indol-3-yl)glycerol 3-phosphate + L-serine = D-glyceraldehyde 3-phosphate + L-tryptophan + H2O. Its pathway is amino-acid biosynthesis; L-tryptophan biosynthesis; L-tryptophan from chorismate: step 5/5. Functionally, the beta subunit is responsible for the synthesis of L-tryptophan from indole and L-serine. The protein is Tryptophan synthase beta chain of Staphylococcus aureus (strain bovine RF122 / ET3-1).